The primary structure comprises 450 residues: MTWSTSFLSVHFFAFITTSIHAQLTGSVGPLTSVSDKAAVKTCNVLDYGARSDNTTDVGQPIIDAFADCGSGGLIYIPEGDYLLKNWISLENGSAWAIQLDGVLYRDSSPSSQSYMFEISGGRDFELFSSNATGAIQGSGYLYHRDDTYTGPRMLHISGVSDWSVHDLVLVDSPMFHFVIDGGYNGEVYNMAIRGADHGGLDGIDVYGDNMWIHDIMVTNKDECVTTKTNSHNFLIENIYCNSSGGCAIGSLGSGANVSNIVYRNVYTWDSNQMMMIKSNGGSGDVSNAVFENFIGHGNAYSLDLDSYWSSMDAIDGDGIYYHNITFQNWTGTAVDGETRPPIRVICPEDTPCTEIALVQIDLWVEEGGYDEYICKNAYGSGYCLDSATGTSTPYTTTTYVNSAPTGYEAPTMTDDLATAFGTSASIPIPTIPASFFPGVTPISAVAGSS.

The N-terminal stretch at 1–22 (MTWSTSFLSVHFFAFITTSIHA) is a signal peptide. A disulfide bond links Cys43 and Cys69. 3 N-linked (GlcNAc...) asparagine glycosylation sites follow: Asn54, Asn92, and Asn131. The active-site Proton donor is Asp222. Residues Cys224 and Cys241 are joined by a disulfide bond. Asn242 and Asn257 each carry an N-linked (GlcNAc...) asparagine glycan. Residue His297 is part of the active site. N-linked (GlcNAc...) asparagine glycosylation is found at Asn324 and Asn329. 2 disulfides stabilise this stretch: Cys347–Cys353 and Cys375–Cys384.

The protein belongs to the glycosyl hydrolase 28 family.

Its subcellular location is the secreted. Its function is as follows. Pectinolytic enzymes consist of four classes of enzymes: pectine lyase, polygalacturonase, pectin methylesterase and rhamnogalacturonase. Hydrolyzes alpha-D-galacturonopyranosyl-(1,2)-alpha-L-rhamnopyranosyl linkages in the backbone of the hairy regions of pectins. This chain is Probable rhamnogalacturonase E (rhgE), found in Aspergillus niger.